A 238-amino-acid chain; its full sequence is Ribonuclease 3 (238 aa).

Residues 10–139 (FKQFQEQTGI…FIGALYLDQG (130 aa)) form the RNase III domain. Glu52 lines the Mg(2+) pocket. Asp56 is a catalytic residue. Mg(2+)-binding residues include Asp125 and Glu128. Residue Glu128 is part of the active site. The DRBM domain occupies 165 to 234 (DYKSQLQEFV…AQMALAKLKQ (70 aa)).

It belongs to the ribonuclease III family. In terms of assembly, homodimer. Mg(2+) serves as cofactor.

Its subcellular location is the cytoplasm. The catalysed reaction is Endonucleolytic cleavage to 5'-phosphomonoester.. Its function is as follows. Digests double-stranded RNA. Involved in the processing of primary rRNA transcript to yield the immediate precursors to the large and small rRNAs (23S and 16S). Processes some mRNAs, and tRNAs when they are encoded in the rRNA operon. Processes pre-crRNA and tracrRNA of type II CRISPR loci if present in the organism. This Anoxybacillus flavithermus (strain DSM 21510 / WK1) protein is Ribonuclease 3.